The sequence spans 1268 residues: ATP-dependent helicase/nuclease subunit A (1268 aa).

The UvrD-like helicase ATP-binding domain maps to 3 to 476 (TKWTEEQELA…IMLYKNFRSR (474 aa)). ATP is bound at residue 24–31 (AAAGSGKT). The 297-residue stretch at 528 to 824 (IENLKVAGDI…RIMSIHKSKG (297 aa)) folds into the UvrD-like helicase C-terminal domain.

This sequence belongs to the helicase family. AddA subfamily. Heterodimer of AddA and AddB/RexB. The cofactor is Mg(2+).

It carries out the reaction Couples ATP hydrolysis with the unwinding of duplex DNA by translocating in the 3'-5' direction.. It catalyses the reaction ATP + H2O = ADP + phosphate + H(+). Its function is as follows. The heterodimer acts as both an ATP-dependent DNA helicase and an ATP-dependent, dual-direction single-stranded exonuclease. Recognizes the chi site generating a DNA molecule suitable for the initiation of homologous recombination. The AddA nuclease domain is required for chi fragment generation; this subunit has the helicase and 3' -&gt; 5' nuclease activities. This is ATP-dependent helicase/nuclease subunit A from Clostridium perfringens (strain 13 / Type A).